Reading from the N-terminus, the 256-residue chain is Alcohol dehydrogenase (256 aa).

12 to 35 (FVAGLGGIGLDTSKELVKRDLKNL) contributes to the NAD(+) binding site. Ser140 is a binding site for substrate. Tyr153 (proton acceptor) is an active-site residue.

It belongs to the short-chain dehydrogenases/reductases (SDR) family. Homodimer.

The catalysed reaction is a primary alcohol + NAD(+) = an aldehyde + NADH + H(+). The enzyme catalyses a secondary alcohol + NAD(+) = a ketone + NADH + H(+). The chain is Alcohol dehydrogenase (Adh) from Drosophila yakuba (Fruit fly).